The following is a 381-amino-acid chain: Mannitol-1-phosphate 5-dehydrogenase (381 aa).

Position 3 to 14 (3 to 14 (AVHFGAGNIGRG)) interacts with NAD(+).

This sequence belongs to the mannitol dehydrogenase family.

It carries out the reaction D-mannitol 1-phosphate + NAD(+) = beta-D-fructose 6-phosphate + NADH + H(+). In Photobacterium profundum (strain SS9), this protein is Mannitol-1-phosphate 5-dehydrogenase.